Here is an 838-residue protein sequence, read N- to C-terminus: Protein translocase subunit SecA (838 aa).

ATP-binding positions include Q87, 105-109 (GEGKT), and D494. 2 stretches are compositionally biased toward basic and acidic residues: residues 781–790 (EQEFQHKDET) and 803–819 (EDAK…KVGR). The tract at residues 781–838 (EQEFQHKDETANVQYSGPAESAEDAKKEPKRREAPKVGRNDPCPCGSGKKYKKCHGAK) is disordered. Zn(2+) is bound by residues C823, C825, C834, and H835. Residues 829-838 (KKYKKCHGAK) are compositionally biased toward basic residues.

The protein belongs to the SecA family. As to quaternary structure, monomer and homodimer. Part of the essential Sec protein translocation apparatus which comprises SecA, SecYEG and auxiliary proteins SecDF-YajC and YidC. The cofactor is Zn(2+).

The protein localises to the cell inner membrane. Its subcellular location is the cytoplasm. The catalysed reaction is ATP + H2O + cellular proteinSide 1 = ADP + phosphate + cellular proteinSide 2.. Functionally, part of the Sec protein translocase complex. Interacts with the SecYEG preprotein conducting channel. Has a central role in coupling the hydrolysis of ATP to the transfer of proteins into and across the cell membrane, serving as an ATP-driven molecular motor driving the stepwise translocation of polypeptide chains across the membrane. This is Protein translocase subunit SecA from Solidesulfovibrio magneticus (strain ATCC 700980 / DSM 13731 / RS-1) (Desulfovibrio magneticus).